The primary structure comprises 77 residues: Conotoxin ArMKLT2-022 (77 aa).

The first 22 residues, Met-1 to Ala-22, serve as a signal peptide directing secretion. A propeptide spanning residues Asp-23 to Thr-46 is cleaved from the precursor. Gln-49 is modified (pyrrolidone carboxylic acid). 3 cysteine pairs are disulfide-bonded: Cys-50-Cys-65, Cys-57-Cys-68, and Cys-64-Cys-73.

Belongs to the conotoxin O1 superfamily. In terms of tissue distribution, expressed by the venom duct.

The protein resides in the secreted. The sequence is that of Conotoxin ArMKLT2-022 from Conus arenatus (Sand-dusted cone).